The chain runs to 567 residues: uncharacterized protein (567 aa).

Helical transmembrane passes span 136 to 156 (LFCL…LIFA), 159 to 179 (FMGI…SDII), 193 to 213 (LLLG…SEVF), 217 to 237 (LCFL…FFFV), 258 to 278 (ILGG…LTFG), 291 to 311 (LLLL…SITE), 334 to 354 (FLIG…FQLV), 364 to 384 (LRLA…GILM), 393 to 415 (LLFS…HPGI), 426 to 446 (PANV…IFAF), 457 to 477 (TLYL…SAVI), and 536 to 553 (AQQF…LCIL).

It belongs to the major facilitator superfamily.

The protein resides in the membrane. This is an uncharacterized protein from Schizosaccharomyces pombe (strain 972 / ATCC 24843) (Fission yeast).